The sequence spans 106 residues: Vacuolar ATPase assembly integral membrane protein VMA21 homolog (106 aa).

The tract at residues 1-26 (MSNKNKKSGGAGNGAAQKQTRQQSHD) is disordered. The Cytoplasmic segment spans residues 1–32 (MSNKNKKSGGAGNGAAQKQTRQQSHDSQDYSS). The chain crosses the membrane as a helical span at residues 33–53 (FKIVLFYCMLIVFLPVVTFFL). Residues 54 to 69 (LKGFVLDRFFSLSEVK) are Lumenal-facing. Residues 70–90 (VNIASAVGAVVSLHIALGLYI) form a helical membrane-spanning segment. Topologically, residues 91–106 (YRAYFGATGSKAVKED) are cytoplasmic.

It belongs to the VMA21 family.

The protein resides in the endoplasmic reticulum membrane. Its subcellular location is the endoplasmic reticulum-Golgi intermediate compartment membrane. The protein localises to the cytoplasmic vesicle. It localises to the COPII-coated vesicle membrane. Functionally, required for the assembly of the V0 complex of the vacuolar ATPase (V-ATPase) in the endoplasmic reticulum. In Drosophila ananassae (Fruit fly), this protein is Vacuolar ATPase assembly integral membrane protein VMA21 homolog.